We begin with the raw amino-acid sequence, 793 residues long: E3 ubiquitin-protein ligase UHRF1 (793 aa).

A Ubiquitin-like domain is found at 1–78; it reads MWIQVRTMDG…IQLLVRQSLV (78 aa). Phosphoserine is present on residues serine 76, serine 91, serine 95, and serine 165. Positions 82-124 are disordered; sequence STKERDSELSDTDSGCCLGQSESDKSSTHGEAAAETDSRPADE. Tudor-like stretches follow at residues 133–209 and 216–283; these read GLYK…ARAR and DLEV…IERP. Lysine 279 is covalently cross-linked (Glycyl lysine isopeptide (Lys-Gly) (interchain with G-Cter in SUMO2)). Phosphoserine is present on serine 287. The linker stretch occupies residues 296–301; it reads RKSGPS. Position 298 is a phosphoserine; by PKA (serine 298). A PHD-type zinc finger spans residues 310 to 366; it reads NRLCRVCACHLCGGRQDPDKQLMCDECDMAFHIYCLDPPLSSVPSEDEWYCPECRND. 2 histone H3R2me0 binding regions span residues 333-337 and 353-355; these read CDECD and PSE. Serine 368 carries the post-translational modification Phosphoserine. Residue lysine 385 forms a Glycyl lysine isopeptide (Lys-Gly) (interchain with G-Cter in SUMO2) linkage. Lysine 399 is modified (N6-acetyllysine). Positions 419 to 582 constitute a YDG domain; that stretch reads GPIPGIPVGT…FLVWRYLLRR (164 aa). The required to promote base flipping stretch occupies residues 445–446; it reads HV. DNA is bound by residues 463 to 464 and aspartate 469; that span reads AG. Required for formation of a 5-methylcytosine-binding pocket stretches follow at residues 466 to 469 and 478 to 481; these read YEDD and YTGS. Lysine 546 is subject to N6-acetyllysine; alternate. A Glycyl lysine isopeptide (Lys-Gly) (interchain with G-Cter in SUMO2); alternate cross-link involves residue lysine 546. Over residues 618–629 the composition is skewed to basic and acidic residues; that stretch reads REREKENSKREE. The interval 618–673 is disordered; that stretch reads REREKENSKREEEEQQEGGFASPRTGKGKWKRKSAGGGPSRAGSPRRTSKKTKVEP. Serine 639 is modified (phosphoserine; by CDK1). Serine 651 carries the phosphoserine modification. Lysine 670 is covalently cross-linked (Glycyl lysine isopeptide (Lys-Gly) (interchain with G-Cter in SUMO2)). Serine 707 and serine 709 each carry phosphoserine. The RING-type zinc finger occupies 724–763; it reads CICCQELVFRPITTVCQHNVCKDCLDRSFRAQVFSCPACR.

Interacts with DNMT3A and DNMT3B. Interacts with DNMT1; the interaction is direct. Interacts with USP7; leading to its deubiquitination. Interacts with histone H3. Interacts with HDAC1, but not with HDAC2. Interacts with BLTP3A. Interacts with PML. Interacts with EHMT2. Binds hemimethylated CpG containing oligonucleotides. Interacts with ZNF263; recruited to the SIX3 promoter along with other proteins involved in chromatin modification and transcriptional corepression where it contributes to transcriptional repression. Interacts with UHRF2. Interacts with FANCD2. Interacts with TET1 isoform 2; this interaction induces the recruitment of TET1 isoform 2 to replicating heterochromatin. Phosphorylation at Ser-298 of the linker region decreases the binding to H3K9me3. Phosphorylation at Ser-639 by CDK1 during M phase impairs interaction with USP7, preventing deubiquitination and leading to degradation by the proteasome. In terms of processing, ubiquitinated; which leads to proteasomal degradation. Autoubiquitinated; interaction with USP7 leads to deubiquitination and prevents degradation. Ubiquitination and degradation takes place during M phase, when phosphorylation at Ser-639 prevents interaction with USP7 and subsequent deubiquitination. Polyubiquitination may be stimulated by DNA damage. Expressed in thymus, bone marrow, testis, lung and heart. Overexpressed in breast cancer.

It is found in the nucleus. The catalysed reaction is S-ubiquitinyl-[E2 ubiquitin-conjugating enzyme]-L-cysteine + [acceptor protein]-L-lysine = [E2 ubiquitin-conjugating enzyme]-L-cysteine + N(6)-ubiquitinyl-[acceptor protein]-L-lysine.. It participates in protein modification; protein ubiquitination. Multidomain protein that acts as a key epigenetic regulator by bridging DNA methylation and chromatin modification. Specifically recognizes and binds hemimethylated DNA at replication forks via its YDG domain and recruits DNMT1 methyltransferase to ensure faithful propagation of the DNA methylation patterns through DNA replication. In addition to its role in maintenance of DNA methylation, also plays a key role in chromatin modification: through its tudor-like regions and PHD-type zinc fingers, specifically recognizes and binds histone H3 trimethylated at 'Lys-9' (H3K9me3) and unmethylated at 'Arg-2' (H3R2me0), respectively, and recruits chromatin proteins. Enriched in pericentric heterochromatin where it recruits different chromatin modifiers required for this chromatin replication. Also localizes to euchromatic regions where it negatively regulates transcription possibly by impacting DNA methylation and histone modifications. Has E3 ubiquitin-protein ligase activity by mediating the ubiquitination of target proteins such as histone H3 and PML. It is still unclear how E3 ubiquitin-protein ligase activity is related to its role in chromatin in vivo. Plays a role in DNA repair by cooperating with UHRF2 to ensure recruitment of FANCD2 to interstrand cross-links (ICLs) leading to FANCD2 activation. Acts as a critical player of proper spindle architecture by catalyzing the 'Lys-63'-linked ubiquitination of KIF11, thereby controlling KIF11 localization on the spindle. This Homo sapiens (Human) protein is E3 ubiquitin-protein ligase UHRF1 (UHRF1).